The chain runs to 321 residues: tRNA pseudouridine synthase B (321 aa).

Catalysis depends on aspartate 47, which acts as the Nucleophile.

Belongs to the pseudouridine synthase TruB family. Type 1 subfamily.

The catalysed reaction is uridine(55) in tRNA = pseudouridine(55) in tRNA. Its function is as follows. Responsible for synthesis of pseudouridine from uracil-55 in the psi GC loop of transfer RNAs. The protein is tRNA pseudouridine synthase B of Shewanella baltica (strain OS223).